Here is a 538-residue protein sequence, read N- to C-terminus: Putative cysteine ligase BshC (538 aa).

Positions 460–483 (KINEQIELLEKMLKRNVEKKHEVQ) form a coiled coil.

It belongs to the BshC family.

Its function is as follows. Involved in bacillithiol (BSH) biosynthesis. May catalyze the last step of the pathway, the addition of cysteine to glucosamine malate (GlcN-Mal) to generate BSH. The chain is Putative cysteine ligase BshC from Bacillus mycoides (strain KBAB4) (Bacillus weihenstephanensis).